A 299-amino-acid chain; its full sequence is Pyridoxal 5'-phosphate synthase subunit PdxS (299 aa).

Asp-29 lines the D-ribose 5-phosphate pocket. Lys-86 functions as the Schiff-base intermediate with D-ribose 5-phosphate in the catalytic mechanism. A D-ribose 5-phosphate-binding site is contributed by Gly-158. Arg-170 is a binding site for D-glyceraldehyde 3-phosphate. Residues Gly-219 and 240–241 (GS) each bind D-ribose 5-phosphate.

Belongs to the PdxS/SNZ family. In terms of assembly, in the presence of PdxT, forms a dodecamer of heterodimers.

The enzyme catalyses aldehydo-D-ribose 5-phosphate + D-glyceraldehyde 3-phosphate + L-glutamine = pyridoxal 5'-phosphate + L-glutamate + phosphate + 3 H2O + H(+). It participates in cofactor biosynthesis; pyridoxal 5'-phosphate biosynthesis. Catalyzes the formation of pyridoxal 5'-phosphate from ribose 5-phosphate (RBP), glyceraldehyde 3-phosphate (G3P) and ammonia. The ammonia is provided by the PdxT subunit. Can also use ribulose 5-phosphate and dihydroxyacetone phosphate as substrates, resulting from enzyme-catalyzed isomerization of RBP and G3P, respectively. This is Pyridoxal 5'-phosphate synthase subunit PdxS from Protochlamydia amoebophila (strain UWE25).